Reading from the N-terminus, the 324-residue chain is Carbonic anhydrase 15 (324 aa).

Residues 1–18 form the signal peptide; sequence MWALDFLLSFLLIQLAAQ. An Alpha-carbonic anhydrase domain is found at 23 to 293; sequence GTWCYDSQDP…LGGRRISASP (271 aa). Catalysis depends on H90, which acts as the Proton acceptor. Residues H122, H124, and H147 each coordinate Zn(2+). Y155 is an active-site residue. 3 N-linked (GlcNAc...) asparagine glycosylation sites follow: N184, N194, and N203. Position 231-232 (231-232) interacts with substrate; it reads TT. A disordered region spans residues 269–290; the sequence is LHPRPLTSNFRPQQPLGGRRIS.

This sequence belongs to the alpha-carbonic anhydrase family. Zn(2+) is required as a cofactor.

It is found in the secreted. It carries out the reaction hydrogencarbonate + H(+) = CO2 + H2O. Repressed by coumarins. Its function is as follows. Reversible hydration of carbon dioxide. This chain is Carbonic anhydrase 15 (Ca15), found in Mus musculus (Mouse).